The sequence spans 418 residues: MTQKLAILGGDPVRTRPWPEWPHVGPEDVDRLRTVIESRNLGGIPFPNTMHQQFAERFTAKLGAKYGLLATNGTVTLSMALRALGIHAGDEVITTAFTWVGTVAGIVHVNAVPVLADISDDNWCIDPVKVEEAITDRTRAIMVVHLGNQVADMDALLDICRRHNLLLIEDCAHAHFAEWRGRCVGTIGDAGSYSFETSKIMTSGEGGFLVTATEEAFHRAMSLAHVGRKEAPYDRFPGRVFGWNHRATEMQAAVLLGQLDRYDALDKQRTAMAEMLTQGLVEIGGFKPLAEDPRVTRRQRYELLFRFDTEAWDGLHRDKVLEAILAEGVEFEGNTFYPPMHRDELFHITADDWPAIRERYGEKIEPDAFHLPVAERVAFDEAVWIHHSLLSVEPEDVQDMLDAVVKVRDNLGALKKSL.

N6-(pyridoxal phosphate)lysine is present on lysine 199.

Belongs to the DegT/DnrJ/EryC1 family. L-glutamine:2-deoxy-scyllo-inosose/scyllo-inosose aminotransferase subfamily. Requires pyridoxal 5'-phosphate as cofactor.

The catalysed reaction is 3-amino-2,3-dideoxy-scyllo-inosose + L-glutamine = 2-deoxystreptamine + 2-oxoglutaramate. It functions in the pathway metabolic intermediate biosynthesis; 2-deoxystreptamine biosynthesis; 2-deoxystreptamine from D-glucose 6-phosphate: step 4/4. It participates in antibiotic biosynthesis; gentamicin biosynthesis. In terms of biological role, catalyzes the transamination of 3-amino-2,3-dideoxy-scyllo-inosose (amino-DOI) into 2-deoxystreptamine (DOS). In Micromonospora echinospora (Micromonospora purpurea), this protein is Putative L-glutamine:3-amino-2,3-dideoxy-scyllo-inosose aminotransferase (gtmD).